We begin with the raw amino-acid sequence, 1460 residues long: Nonribosomal peptide synthetase 6 (1460 aa).

The segment at 63 to 468 is adenylation; it reads EQAALHPEKI…GRQDQQVKLR (406 aa). The Carrier 1 domain occupies 600 to 675; it reads EPTTEMEIKL…AMATKIKPLS (76 aa). The residue at position 636 (serine 636) is an O-(pantetheine 4'-phosphoryl)serine. The segment at 712–1135 is condensation; that stretch reads VQDVYPCTPL…AVLDPSEAQD (424 aa). Carrier domains lie at 1168–1241 and 1236–1312; these read SPNE…GNEK and SIGN…EETD. 2 positions are modified to O-(pantetheine 4'-phosphoryl)serine: serine 1202 and serine 1273. The tract at residues 1303 to 1324 is disordered; it reads ELASSAEETDSPQTETNSNAPY. The segment covering 1313–1322 has biased composition (polar residues); the sequence is SPQTETNSNA.

This sequence belongs to the NRP synthetase family.

It participates in siderophore biosynthesis. In terms of biological role, NRPS involved in extracellular coprogen-type siderophores biosynthesis. The role of extracellular siderophores in fungal virulence to plants is to supply iron to the fungus during plant infection, but not to act as phytotoxins, depriving their hosts of iron. The sequence is that of Nonribosomal peptide synthetase 6 from Alternaria brassicicola (Dark leaf spot agent).